The chain runs to 240 residues: Biosynthetic peptidoglycan transglycosylase (240 aa).

Residues W15–F35 form a helical membrane-spanning segment.

It belongs to the glycosyltransferase 51 family.

Its subcellular location is the cell inner membrane. The catalysed reaction is [GlcNAc-(1-&gt;4)-Mur2Ac(oyl-L-Ala-gamma-D-Glu-L-Lys-D-Ala-D-Ala)](n)-di-trans,octa-cis-undecaprenyl diphosphate + beta-D-GlcNAc-(1-&gt;4)-Mur2Ac(oyl-L-Ala-gamma-D-Glu-L-Lys-D-Ala-D-Ala)-di-trans,octa-cis-undecaprenyl diphosphate = [GlcNAc-(1-&gt;4)-Mur2Ac(oyl-L-Ala-gamma-D-Glu-L-Lys-D-Ala-D-Ala)](n+1)-di-trans,octa-cis-undecaprenyl diphosphate + di-trans,octa-cis-undecaprenyl diphosphate + H(+). It participates in cell wall biogenesis; peptidoglycan biosynthesis. Its function is as follows. Peptidoglycan polymerase that catalyzes glycan chain elongation from lipid-linked precursors. This Paraburkholderia phytofirmans (strain DSM 17436 / LMG 22146 / PsJN) (Burkholderia phytofirmans) protein is Biosynthetic peptidoglycan transglycosylase.